The primary structure comprises 350 residues: Protein-glutamate methylesterase/protein-glutamine glutaminase 1 (350 aa).

The region spanning 3 to 121 (KVLIVEDSPV…RDYDIRARDL (119 aa)) is the Response regulatory domain. Asp54 carries the post-translational modification 4-aspartylphosphate. One can recognise a CheB-type methylesterase domain in the interval 148-342 (PASGEPDIGK…PPEKIARVLV (195 aa)). Residues Ser170, His197, and Asp290 contribute to the active site.

The protein belongs to the CheB family. Post-translationally, phosphorylated by CheA. Phosphorylation of the N-terminal regulatory domain activates the methylesterase activity.

Its subcellular location is the cytoplasm. The catalysed reaction is [protein]-L-glutamate 5-O-methyl ester + H2O = L-glutamyl-[protein] + methanol + H(+). The enzyme catalyses L-glutaminyl-[protein] + H2O = L-glutamyl-[protein] + NH4(+). In terms of biological role, involved in chemotaxis. Part of a chemotaxis signal transduction system that modulates chemotaxis in response to various stimuli. Catalyzes the demethylation of specific methylglutamate residues introduced into the chemoreceptors (methyl-accepting chemotaxis proteins or MCP) by CheR. Also mediates the irreversible deamidation of specific glutamine residues to glutamic acid. The protein is Protein-glutamate methylesterase/protein-glutamine glutaminase 1 of Syntrophus aciditrophicus (strain SB).